Here is a 475-residue protein sequence, read N- to C-terminus: Ribulose bisphosphate carboxylase large chain (475 aa).

The propeptide occupies Met-1 to Ser-2. Pro-3 is subject to N-acetylproline. Lys-14 is modified (N6,N6,N6-trimethyllysine). Substrate contacts are provided by Asn-123 and Thr-173. Residue Lys-175 is the Proton acceptor of the active site. A substrate-binding site is contributed by Lys-177. Lys-201, Asp-203, and Glu-204 together coordinate Mg(2+). Lys-201 carries the N6-carboxylysine modification. His-294 (proton acceptor) is an active-site residue. Arg-295, His-327, and Ser-379 together coordinate substrate.

The protein belongs to the RuBisCO large chain family. Type I subfamily. Heterohexadecamer of 8 large chains and 8 small chains; disulfide-linked. The disulfide link is formed within the large subunit homodimers. The cofactor is Mg(2+). The disulfide bond which can form in the large chain dimeric partners within the hexadecamer appears to be associated with oxidative stress and protein turnover.

The protein localises to the plastid. The protein resides in the chloroplast. The catalysed reaction is 2 (2R)-3-phosphoglycerate + 2 H(+) = D-ribulose 1,5-bisphosphate + CO2 + H2O. It carries out the reaction D-ribulose 1,5-bisphosphate + O2 = 2-phosphoglycolate + (2R)-3-phosphoglycerate + 2 H(+). Functionally, ruBisCO catalyzes two reactions: the carboxylation of D-ribulose 1,5-bisphosphate, the primary event in carbon dioxide fixation, as well as the oxidative fragmentation of the pentose substrate in the photorespiration process. Both reactions occur simultaneously and in competition at the same active site. The protein is Ribulose bisphosphate carboxylase large chain (rbcL) of Marchantia polymorpha (Common liverwort).